The chain runs to 153 residues: MSVEELSKEQVQMLRKAFDMFDRDKKGYIHTNMVSTILRTLGQTFEENDLQQLIIEIDADGSGELEFDEFLTLTARFLVEEDTEAMQEELREAFRMYDKEGNGYIPTSALREILRALDDKLTEDELDEMIAEIDTDGSGTVDFDEFMEMMTGD.

EF-hand domains lie at 9 to 44, 45 to 80, 85 to 120, and 121 to 153; these read EQVQMLRKAFDMFDRDKKGYIHTNMVSTILRTLGQT, FEENDLQQLIIEIDADGSGELEFDEFLTLTARFLVE, AMQEELREAFRMYDKEGNGYIPTSALREILRALDDK, and LTEDELDEMIAEIDTDGSGTVDFDEFMEMMTGD. D58, D60, S62, E64, and E69 together coordinate Ca(2+). Residues D134, D136, S138, T140, and E145 each coordinate Ca(2+).

The protein belongs to the troponin C family.

Its function is as follows. Troponin is the central regulatory protein of striated muscle contraction. Tn consists of three components: Tn-I which is the inhibitor of actomyosin ATPase, Tn-T which contains the binding site for tropomyosin and Tn-C. The binding of calcium to Tn-C abolishes the inhibitory action of Tn on actin filaments. The protein is Troponin C of Tyrophagus putrescentiae (Mold mite).